The primary structure comprises 24 residues: Alpha-lactalbumin (24 aa).

It belongs to the glycosyl hydrolase 22 family. In terms of assembly, lactose synthase (LS) is a heterodimer of a catalytic component, beta1,4-galactosyltransferase (beta4Gal-T1) and a regulatory component, alpha-lactalbumin (LA). Glycosylated (50% of the proteins). Mammary gland specific. Secreted in milk.

It is found in the secreted. Functionally, regulatory subunit of lactose synthase, changes the substrate specificity of galactosyltransferase in the mammary gland making glucose a good acceptor substrate for this enzyme. This enables LS to synthesize lactose, the major carbohydrate component of milk. In other tissues, galactosyltransferase transfers galactose onto the N-acetylglucosamine of the oligosaccharide chains in glycoproteins. In Felis catus (Cat), this protein is Alpha-lactalbumin (LALBA).